Here is a 726-residue protein sequence, read N- to C-terminus: Catalase-peroxidase (726 aa).

Residues 98 to 226 constitute a cross-link (tryptophyl-tyrosyl-methioninium (Trp-Tyr) (with M-252)); that stretch reads WHSAGTYRMQ…LAAVHMGLIY (129 aa). The Proton acceptor role is filled by H99. Positions 226-252 form a cross-link, tryptophyl-tyrosyl-methioninium (Tyr-Met) (with W-98); it reads YVNPEGVNGQPDPARTAQHVRETFARM. Residue H267 coordinates heme b.

The protein belongs to the peroxidase family. Peroxidase/catalase subfamily. As to quaternary structure, homodimer or homotetramer. It depends on heme b as a cofactor. Formation of the three residue Trp-Tyr-Met cross-link is important for the catalase, but not the peroxidase activity of the enzyme.

The enzyme catalyses H2O2 + AH2 = A + 2 H2O. The catalysed reaction is 2 H2O2 = O2 + 2 H2O. Its function is as follows. Bifunctional enzyme with both catalase and broad-spectrum peroxidase activity. In Roseobacter denitrificans (strain ATCC 33942 / OCh 114) (Erythrobacter sp. (strain OCh 114)), this protein is Catalase-peroxidase.